The primary structure comprises 101 residues: MKNAALCEALPLLATCSHEIPPTPHTVCFVFPPALLLSPSKLTLLNSRRVASRCVIIIDPRLLRLFSCSRPQQLPRDKNQSFAKPSFSFFFFLLTSLLSPF.

Positions 1-17 (MKNAALCEALPLLATCS) are cleaved as a signal peptide. Serine 81 carries GPI-anchor amidated serine lipidation. Positions 82-101 (FAKPSFSFFFFLLTSLLSPF) are cleaved as a propeptide — removed in mature form.

The protein localises to the cell membrane. The polypeptide is Long chronological lifespan protein 1 (LCL1) (Saccharomyces cerevisiae (strain ATCC 204508 / S288c) (Baker's yeast)).